Consider the following 431-residue polypeptide: Indole diterpene prenyltransferase nodD1 (431 aa).

85–86 is an L-tryptophan binding site; that stretch reads FI. 6 residues coordinate substrate: arginine 107, lysine 194, arginine 268, lysine 270, tyrosine 272, and tyrosine 353.

This sequence belongs to the tryptophan dimethylallyltransferase family.

Its pathway is secondary metabolite biosynthesis. Functionally, indole diterpene prenyltransferase; part of the gene cluster that mediates the biosynthesis of the indole diterpenes nodulisporic acids (NA). Nodulisporic acid A (NAA) and its chemically modified derivatives are of particular significance because of their highly potent insecticidal activity against blood-feeding arthropods and lack of observable adverse effects on mammals, in particular the tremogenicity associated with the paspaline-derived IDTs is not observed. The geranylgeranyl diphosphate (GGPP) synthase ggs1, localized outside of the cluster, is proposed to catalyze the first step in nodulisporic acid biosynthesis via conversion of farnesyl pyrophosphate and isopentyl pyrophosphate into geranylgeranyl pyrophosphate (GGPP). Condensation of indole-3-glycerol phosphate with GGPP by the prenyl transferase nodC then forms 3-geranylgeranylindole (3-GGI). Epoxidation by the FAD-dependent monooxygenase nodM leads to a single-epoxidized-GGI that is substrate of the terpene cyclase nodB for cyclization to yield emindole SB. The terminal methyl carbon, C28, of emindole SB is then oxidized by the cytochrome P450 monooxygenase nodW to produce nodulisporic acid F (NAF), the pentacyclic core of NAA. NAF is converted to nodulisporic acid E (NAE) via prenylation. This step is probably performed by one of the indole diterpene prenyltransferases nodD1 or nodD2. Several oxidation steps performed by the FAD-linked oxidoreductase nodO and one of the cytochrome P450 monooxygenase nodR, nodX or nodZ further convert NAE to nodulisporic acid D (NAD). NAD is substrate of cytochrome P450 monooxygenase nodJ to produce the precursor of nodulisporic acid C (NAC), converted to NAC by one of the indole diterpene prenyltransferases nodD1 or nodD2. The FAD-dependent monooxygenase nodY2 then oxidizes NAC to nodulisporic acid B (NAB). Finally NAB is converted to NAA by one of the cytochrome P450 monooxygenases nodR, nodX or nodZ. The protein is Indole diterpene prenyltransferase nodD1 of Hypoxylon pulicicidum.